The primary structure comprises 231 residues: CLAVATA3/ESR (CLE)-related protein 4B-2 (231 aa).

The N-terminal stretch at 1-21 (MATNTMLCLLILSVVLALAFA) is a signal peptide. Positions 21–83 (ATNKKGDEEP…SNQLPNNNWM (63 aa)) are required for secretion from the host cytoplasm to the host apoplasm. Asn-32 carries N-linked (GlcNAc...) asparagine glycosylation. The disordered stretch occupies residues 116–231 (RKTGMHSQRH…APAGPDPIHH (116 aa)). Basic and acidic residues-rich tracts occupy residues 125 to 137 (HHEETTLEQEKRV) and 144 to 221 (PIHH…EKRG). Residues 127 to 135 (EETTLEQEK) form an A-1 repeat. The interval 127-219 (EETTLEQEKR…HEETTFEQEK (93 aa)) is 5 X approximate repeat A. A CLE-1 repeat occupies 136 to 147 (RVAGAGPDPIHH). The segment at 136 to 231 (RVAGAGPDPI…APAGPDPIHH (96 aa)) is 5 X approximate repeat CLE. Residues 148-156 (EETTLEQEK) form an A-2 repeat. One copy of the CLE-2 repeat lies at 157 to 168 (RAVPAGPDPKHH). Residues 169–177 (EETTLEQEK) form an A-3 repeat. Residues 178 to 189 (RAVPAGPDPKHH) form a CLE-3 repeat. An A-4 repeat occupies 190 to 198 (EETTLEQEK). The CLE-4 repeat unit spans residues 199–210 (RAVPAGPDPKHH). One copy of the A-5 repeat lies at 211–219 (EETTFEQEK). One copy of the CLE-5 repeat lies at 220–231 (RGAPAGPDPIHH).

This sequence belongs to the CLV3/ESR signal peptide family. As to expression, highly expressed exclusively within the dorsal esophageal gland cell during syncytium formation in host plants.

It localises to the secreted. Its subcellular location is the host cytoplasm. The protein resides in the host extracellular space. The protein localises to the extracellular space. It is found in the apoplast. In terms of biological role, mimics host plant CLE extracellular signal peptides that regulate cell fate. May play a role in the differentiation or division of feeding cells (syncytia) induced in plant roots during infection. This is CLAVATA3/ESR (CLE)-related protein 4B-2 (CLE-4B-2) from Globodera rostochiensis (Golden nematode worm).